A 558-amino-acid polypeptide reads, in one-letter code: Membrane transporter D2 (558 aa).

Residues 1-28 form a disordered region; it reads MTLKKRSSAPELPTSLDEDEEEDSPQPL. The Cytoplasmic segment spans residues 1-38; that stretch reads MTLKKRSSAPELPTSLDEDEEEDSPQPLSNTPFFSMKN. The chain crosses the membrane as a helical span at residues 39–59; it reads LIVATPIILTPLLYGYNLGFV. Topologically, residues 60–152 are extracellular; sequence GPYSTMYGYA…QVGYSSIQSG (93 aa). Residues 153-173 form a helical membrane-spanning segment; sequence VFAGSLVIGSTMGALMGGYLT. Over 174-179 the chain is Cytoplasmic; that stretch reads KRLDYC. A helical membrane pass occupies residues 180–200; it reads KSFLFIGLLSVIGNVLTHVAT. Residues 201 to 204 are Extracellular-facing; the sequence is GLFH. Residues 205–225 form a helical membrane-spanning segment; sequence YWVLFVARIVLGFPLGWQSIT. Topologically, residues 226 to 241 are cytoplasmic; that stretch reads SSHYTDKFAPANHAKT. A helical membrane pass occupies residues 242–262; it reads LGTLFQVSVSTGIFVTSFFGL. Topologically, residues 263 to 281 are extracellular; sequence VLGNTIQYDAASNANTMGR. The helical transmembrane segment at 282-302 threads the bilayer; sequence MQGLVSVSTLLSIFVVFLPLI. Topologically, residues 303-335 are cytoplasmic; that stretch reads TKDGYSKSRRGDYEGENSEDASRKAAEEYTMTQ. Residues 336 to 356 form a helical membrane-spanning segment; sequence MIGPILNGVAMGCVTQLTGIN. The Extracellular segment spans residues 357-373; it reads ANMNFAPTIMSNLGLQP. A helical transmembrane segment spans residues 374-394; sequence LVGNIIVMAWNMLATFCVIPL. At 395 to 402 the chain is on the cytoplasmic side; it reads SRRFSMRT. The chain crosses the membrane as a helical span at residues 403–423; that stretch reads LFLFCGFVGSLCCVFLGGIPV. Over 424–441 the chain is Extracellular; it reads YPGVTKSDKAISGIAITG. The helical transmembrane segment at 442–463 threads the bilayer; that stretch reads IAIFIALYEMGVGPCFYVLAVD. The Cytoplasmic portion of the chain corresponds to 464–478; sequence VFPESFRPIGSSITV. The chain crosses the membrane as a helical span at residues 479–499; it reads GVMFIFNLIINICYPIATEGI. Over 500-512 the chain is Extracellular; it reads SGGPSGNPNKGQA. A helical membrane pass occupies residues 513 to 533; that stretch reads VAFIFFGCIGVVACVIEYFFL. At 534–558 the chain is on the cytoplasmic side; that stretch reads QPWVEPEAKMTDDLDGAAVPEGKHD.

This sequence belongs to the major facilitator superfamily. Sugar transporter (TC 2.A.1.1) family.

It localises to the membrane. The sequence is that of Membrane transporter D2 from Leishmania donovani.